We begin with the raw amino-acid sequence, 453 residues long: MSPQTETKASVGFKAGVKEYKLTYYTPEYETKDTDILAAFRVTAQPGVPPEERGAAVAAESSTGTWTTVWTDGLTSLDRYKGRCYHIEPVPGEEEQFIAYVAYPLDLFEEGSVTNMFTSIVGNVFGFKALRALRLEDLRIPVAYVKTFQGPPHGIQVERDKLNKYGRPLLGCTIKPKLGLSAKNYGRAVYECLRGGLDFTKDDENVNSQPFMRWRDRFLFCAEAIYKSQAETGEIKGHYLNATAGTCEEMIKRAVFARELAVPIVMHDYITGGFTANTSLAHYCRDNGLLLHIHRAMHAVIDRQKNHGMHFRVLAKALRMSGGDHIHAGTVVGKLEGERDITLGFVDLLRDDYIEKDRSRGIYFTQDWVSLPGVLPVASRGIHVWHMPALTEIFGDDSVLQFGGGTLGHPWGNAPGAVANRVALEACVKARNEGRDLAVDGGDIIREACKWSP.

Residues 1-2 (MS) constitute a propeptide that is removed on maturation. The residue at position 3 (Pro3) is an N-acetylproline. An N6,N6,N6-trimethyllysine modification is found at Lys14. 2 residues coordinate substrate: Asn123 and Thr173. Lys175 functions as the Proton acceptor in the catalytic mechanism. Substrate is bound at residue Lys177. Lys201, Asp203, and Glu204 together coordinate Mg(2+). At Lys201 the chain carries N6-carboxylysine. His294 functions as the Proton acceptor in the catalytic mechanism. Substrate contacts are provided by Arg295, His327, and Ser379.

It belongs to the RuBisCO large chain family. Type I subfamily. As to quaternary structure, heterohexadecamer of 8 large chains and 8 small chains; disulfide-linked. The disulfide link is formed within the large subunit homodimers. Mg(2+) is required as a cofactor. In terms of processing, the disulfide bond which can form in the large chain dimeric partners within the hexadecamer appears to be associated with oxidative stress and protein turnover.

Its subcellular location is the plastid. The protein localises to the chloroplast. It catalyses the reaction 2 (2R)-3-phosphoglycerate + 2 H(+) = D-ribulose 1,5-bisphosphate + CO2 + H2O. The enzyme catalyses D-ribulose 1,5-bisphosphate + O2 = 2-phosphoglycolate + (2R)-3-phosphoglycerate + 2 H(+). RuBisCO catalyzes two reactions: the carboxylation of D-ribulose 1,5-bisphosphate, the primary event in carbon dioxide fixation, as well as the oxidative fragmentation of the pentose substrate in the photorespiration process. Both reactions occur simultaneously and in competition at the same active site. The chain is Ribulose bisphosphate carboxylase large chain from Rubia tinctorum (Madder).